Consider the following 1377-residue polypeptide: DNA-directed RNA polymerase subunit beta (1377 aa).

Belongs to the RNA polymerase beta chain family. As to quaternary structure, the RNAP catalytic core consists of 2 alpha, 1 beta, 1 beta' and 1 omega subunit. When a sigma factor is associated with the core the holoenzyme is formed, which can initiate transcription.

The catalysed reaction is RNA(n) + a ribonucleoside 5'-triphosphate = RNA(n+1) + diphosphate. Functionally, DNA-dependent RNA polymerase catalyzes the transcription of DNA into RNA using the four ribonucleoside triphosphates as substrates. This Brucella suis biovar 1 (strain 1330) protein is DNA-directed RNA polymerase subunit beta.